A 245-amino-acid chain; its full sequence is 8-amino-3,8-dideoxy-manno-octulosonate cytidylyltransferase (245 aa).

It belongs to the KdsB family.

It localises to the cytoplasm. The enzyme catalyses 8-amino-3,8-dideoxy-alpha-D-manno-octulosonate + CTP = CMP-8-amino-3,8-dideoxy-alpha-D-manno-oct-2-ulosonate + diphosphate. The protein operates within bacterial outer membrane biogenesis; lipopolysaccharide biosynthesis. Functionally, activates KDO8N (a required 8-carbon sugar) for incorporation into bacterial lipopolysaccharide in the Shewanella genus. The polypeptide is 8-amino-3,8-dideoxy-manno-octulosonate cytidylyltransferase (Shewanella baltica (strain OS195)).